The chain runs to 110 residues: Acid stress chaperone HdeA (110 aa).

A signal peptide spans 1-21 (MKKVLGVILGGLLLLPVVSNA). Residues Cys-39 and Cys-87 are joined by a disulfide bond.

The protein belongs to the HdeA family.

Its subcellular location is the periplasm. Required for optimal acid stress protection. Exhibits a chaperone-like activity only at low pH by suppressing non-specifically the aggregation of denaturated periplasmic proteins. The sequence is that of Acid stress chaperone HdeA from Escherichia coli O157:H7.